The primary structure comprises 513 residues: 2-isopropylmalate synthase (513 aa).

The region spanning 4–268 is the Pyruvate carboxyltransferase domain; the sequence is IKIFDTTLRD…ETGIKTELIY (265 aa). Residues D13, H203, H205, and N239 each coordinate Mn(2+). The tract at residues 392–513 is regulatory domain; it reads KLVHFHVHTG…GLLRKNGGAE (122 aa).

It belongs to the alpha-IPM synthase/homocitrate synthase family. LeuA type 1 subfamily. In terms of assembly, homodimer. The cofactor is Mn(2+).

It is found in the cytoplasm. The enzyme catalyses 3-methyl-2-oxobutanoate + acetyl-CoA + H2O = (2S)-2-isopropylmalate + CoA + H(+). Its pathway is amino-acid biosynthesis; L-leucine biosynthesis; L-leucine from 3-methyl-2-oxobutanoate: step 1/4. In terms of biological role, catalyzes the condensation of the acetyl group of acetyl-CoA with 3-methyl-2-oxobutanoate (2-ketoisovalerate) to form 3-carboxy-3-hydroxy-4-methylpentanoate (2-isopropylmalate). This chain is 2-isopropylmalate synthase, found in Thermotoga maritima (strain ATCC 43589 / DSM 3109 / JCM 10099 / NBRC 100826 / MSB8).